A 449-amino-acid polypeptide reads, in one-letter code: Phosphoglucosamine mutase (449 aa).

The Phosphoserine intermediate role is filled by S100. S100, D241, D243, and D245 together coordinate Mg(2+). Residue S100 is modified to Phosphoserine.

The protein belongs to the phosphohexose mutase family. Requires Mg(2+) as cofactor. Post-translationally, activated by phosphorylation.

It carries out the reaction alpha-D-glucosamine 1-phosphate = D-glucosamine 6-phosphate. In terms of biological role, catalyzes the conversion of glucosamine-6-phosphate to glucosamine-1-phosphate. The protein is Phosphoglucosamine mutase of Clostridium botulinum (strain Kyoto / Type A2).